The sequence spans 267 residues: Shikimate dehydrogenase (NADP(+)) (267 aa).

Shikimate contacts are provided by residues 14 to 16 (SLS) and Thr-61. Lys-65 functions as the Proton acceptor in the catalytic mechanism. Residues Asn-86 and Asp-101 each contribute to the shikimate site. Residues 126-130 (GAGGA), 150-155 (NRTHSK), and Leu-213 each bind NADP(+). Residue Tyr-215 participates in shikimate binding. Residue Gly-236 coordinates NADP(+).

This sequence belongs to the shikimate dehydrogenase family. Homodimer.

The enzyme catalyses shikimate + NADP(+) = 3-dehydroshikimate + NADPH + H(+). Its pathway is metabolic intermediate biosynthesis; chorismate biosynthesis; chorismate from D-erythrose 4-phosphate and phosphoenolpyruvate: step 4/7. Involved in the biosynthesis of the chorismate, which leads to the biosynthesis of aromatic amino acids. Catalyzes the reversible NADPH linked reduction of 3-dehydroshikimate (DHSA) to yield shikimate (SA). This Vesicomyosocius okutanii subsp. Calyptogena okutanii (strain HA) protein is Shikimate dehydrogenase (NADP(+)).